A 159-amino-acid polypeptide reads, in one-letter code: C-type lectin 1 (159 aa).

The first 23 residues, 1–23 (MGRFIFISFGLLVVFFFLSGAKG), serve as a signal peptide directing secretion. Disulfide bonds link Cys26–Cys37, Cys54–Cys155, Cys61–Cys157, and Cys130–Cys147. One can recognise a C-type lectin domain in the interval 33–156 (MYGLCYKIFD…CKVKNAFLCQ (124 aa)). N-linked (GlcNAc...) asparagine glycosylation is present at Asn118. Positions 119-121 (LTD) match the Sugar-binding motif. Residues Asp121, Asp127, and Asn143 each contribute to the Ca(2+) site.

It belongs to the true venom lectin family. In terms of assembly, homodimer; disulfide-linked. Expressed by the venom gland.

The protein resides in the secreted. In terms of biological role, lectin which recognizes specific carbohydrate structures and agglutinates a variety of animal cells by binding to cell-surface glycoproteins and glycolipids. May be a calcium-dependent lectin. This chain is C-type lectin 1, found in Bitis gabonica (Gaboon adder).